Consider the following 104-residue polypeptide: DNA-directed RNA polymerase subunit omega (104 aa).

Positions 76-104 (IEEEKRRKEEEEKKIKEQIAKEKEDGEKI) are disordered.

It belongs to the RNA polymerase subunit omega family. As to quaternary structure, the RNAP catalytic core consists of 2 alpha, 1 beta, 1 beta' and 1 omega subunit. When a sigma factor is associated with the core the holoenzyme is formed, which can initiate transcription.

The enzyme catalyses RNA(n) + a ribonucleoside 5'-triphosphate = RNA(n+1) + diphosphate. In terms of biological role, promotes RNA polymerase assembly. Latches the N- and C-terminal regions of the beta' subunit thereby facilitating its interaction with the beta and alpha subunits. In Streptococcus pneumoniae (strain CGSP14), this protein is DNA-directed RNA polymerase subunit omega.